Here is a 519-residue protein sequence, read N- to C-terminus: Tachykinin-like peptides receptor 99D (519 aa).

At 1–100 (MENRSDFEAD…SFAFVVPWWR (100 aa)) the chain is on the extracellular side. N-linked (GlcNAc...) asparagine glycans are attached at residues Asn3, Asn19, Asn22, and Asn61. Residues 101-123 (QVLWSILFGGMVIVATGGNLIVV) form a helical membrane-spanning segment. Residues 124–134 (WIVMTTKRMRT) lie on the Cytoplasmic side of the membrane. A helical membrane pass occupies residues 135–155 (VTNYFIVNLSIADAMVSSLNV). The Extracellular portion of the chain corresponds to 156-175 (TFNYYYMLDSDWPFGEFYCK). Cys174 and Cys254 are joined by a disulfide. Residues 176 to 197 (LSQFIAMLSICASVFTLMAISI) form a helical membrane-spanning segment. The Cytoplasmic portion of the chain corresponds to 198 to 217 (DRYVAIIRPLQPRMSKRCNL). A helical membrane pass occupies residues 218-238 (AIAAVIWLASTLISCPMMIIY). Topologically, residues 239–270 (RTEEVPVRGLSNRTVCYPEWPDGPTNHSTMES) are extracellular. Residues 271 to 292 (LYNILIIILTYFLPIVSMTVTY) traverse the membrane as a helical segment. The Cytoplasmic portion of the chain corresponds to 293–324 (SRVGIELWGSKTIGECTPRQVENVRSKRRVVK). A helical transmembrane segment spans residues 325–346 (MMIVVVLIFAICWLPFHSYFII). At 347 to 361 (TSCYPAITEAPFIQE) the chain is on the extracellular side. A helical membrane pass occupies residues 362 to 384 (LYLAIYWLAMSNSMYNPIIYCWM). At 385–519 (NSRFRYGFKM…STANTTQLLS (135 aa)) the chain is on the cytoplasmic side. A lipid anchor (S-palmitoyl cysteine) is attached at Cys399. A disordered region spans residues 444 to 519 (PSSPKSHRIS…STANTTQLLS (76 aa)). Composition is skewed to polar residues over residues 454-465 (HSGTGRSATLRN) and 487-499 (SYQQ…WSGP). The span at 500–519 (NSATAVTNSSSTANTTQLLS) shows a compositional bias: low complexity.

It belongs to the G-protein coupled receptor 1 family. In terms of tissue distribution, during late embryogenesis (stages 11-15), expressed in the brain and in a specific subset of neurons in each neuromere of the developing ventral ganglion. Expressed in the cortex of the adult brain, which contains the neuronal cell bodies.

It localises to the cell membrane. Functionally, receptor for tachykinin-like peptides. The sequence is that of Tachykinin-like peptides receptor 99D (TkR99D) from Drosophila melanogaster (Fruit fly).